Here is a 779-residue protein sequence, read N- to C-terminus: MSRFPAVAGRAPRRQEEGERSRDLQEERPSAVCIADREEKGCTSQEGGTTPTFPIQKQRKKIIQAVRDNSFLIVTGNTGSGKTTQLPKYLYEAGFSQHGMIGVTQPRKVAAISVAQRVAEEMKCTLGSKVGYQVRFDDCSSKETAIKYMTDGCLLKHILGDPNLTKFSVIILDEAHERTLTTDILFGLLKKLFQEKSPNRKEHLKVVVMSATMELAKLSAFFGNCPIFDIPGRLYPVREKFCNLIGPRDRENTAYIQAIVKVTMDIHLNEMAGDILVFLTGQFEIEKSCELLFQMAESVDYDYDVQDTTLDGLLILPCYGSMTTDQQRRIFLPPPPGIRKCVISTNISATSLTIDGIRYVVDGGFVKQLNHNPRLGLDILEVVPISKSEALQRSGRAGRTASGKCFRIYSKDFWNQCMPDHVIPEIKRTSLTSVVLTLKCLAIHDVIRFPYLDPPNERLILEALKQLYQCDAIDRSGHVTRLGLSMVEFPLPPHLTCAVIKAASLDCEDLLLPIAAMLSVENVFIRPVDPEYQKEAEQRHRELAAKAGGFNDFATLAVIFEQCKSSGAPASWCQKHWIHWRCLFSAFRVEAQLRELIRKLKQQSDFPRETFEGPKHEVLRRCLCAGYFKNVARRSVGRTFCTMDGRGSPVHIHPSSALHEQETKLEWIVFHEVLVTTKVYARIVCPIRYEWVRDLLPKLHEFNAHDLSSVARREVREDARRRWTNKENVKQLKDGISKDVLKKMQRRNDDKSISDARARFLERKQQRTQDHSDTRKETG.

A disordered region spans residues 1 to 53 (MSRFPAVAGRAPRRQEEGERSRDLQEERPSAVCIADREEKGCTSQEGGTTPTF). Residues 13 to 41 (RRQEEGERSRDLQEERPSAVCIADREEKG) show a composition bias toward basic and acidic residues. Positions 42–53 (CTSQEGGTTPTF) are enriched in polar residues. Positions 63 to 231 (IQAVRDNSFL…FGNCPIFDIP (169 aa)) constitute a Helicase ATP-binding domain. 76-83 (GNTGSGKT) is an ATP binding site. The short motif at 173-176 (DEAH) is the DEAH box element. The Helicase C-terminal domain occupies 263 to 442 (TMDIHLNEMA…SVVLTLKCLA (180 aa)). A disordered region spans residues 737–779 (SKDVLKKMQRRNDDKSISDARARFLERKQQRTQDHSDTRKETG).

The protein belongs to the DEAD box helicase family. DEAH subfamily.

The enzyme catalyses ATP + H2O = ADP + phosphate + H(+). Probable ATP-dependent RNA helicase. The polypeptide is Probable ATP-dependent RNA helicase DHX40 (DHX40) (Pongo abelii (Sumatran orangutan)).